Here is a 353-residue protein sequence, read N- to C-terminus: Jasmonate-induced oxygenase 4 (353 aa).

One can recognise a Fe2OG dioxygenase domain in the interval Val-202–Pro-302. Residue Arg-207 participates in jasmonate binding. Residues Asn-209 and Tyr-211 each coordinate 2-oxoglutarate. Fe cation contacts are provided by His-226, Asp-228, and His-283. 2-oxoglutarate-binding residues include Arg-293 and Ser-295. Jasmonate-binding residues include Arg-332 and Arg-336.

Belongs to the iron/ascorbate-dependent oxidoreductase family. L-ascorbate is required as a cofactor. The cofactor is Fe(2+).

It carries out the reaction jasmonate + 2-oxoglutarate + O2 = (1R,2R)-12-hydroxyjasmonate + succinate + CO2. 2-oxoglutarate-dependent dioxygenase involved in the oxidation of jasmonate (JA), a stress-induced phytohormone synthesized in response to attack by pathogens and herbivores, which triggers the activation of defense responses via the JA-mediated signaling pathway. Converts JA to 12-hydroxyjasmonate (12OH-JA), an inactive form of JA. Is specific to free JA, and cannot oxidize the bioactive form jasmonoyl-L-isoleucine (JA-Ile) or other JA-amino acid conjugates. Prevents over-accumulation of JA and indirectly its bioactive form JA-Ile under stress response. Acts as a negative regulator of JA-mediated defense signaling, by contributing to 12OH-JA accumulation, which represses JA defense responses upon infection by the fungal pathogen Botrytis cinerea. Acts as a negative regulator of JA-mediated defense responses upon infestation by the herbivorous caterpillar Mamestra brassicae. This chain is Jasmonate-induced oxygenase 4, found in Arabidopsis thaliana (Mouse-ear cress).